Consider the following 214-residue polypeptide: ATP-dependent Clp protease proteolytic subunit 3 (214 aa).

The Nucleophile role is filled by S106. The active site involves H131.

The protein belongs to the peptidase S14 family. Fourteen ClpP subunits assemble into 2 heptameric rings which stack back to back to give a disk-like structure with a central cavity, resembling the structure of eukaryotic proteasomes.

The protein localises to the cytoplasm. The enzyme catalyses Hydrolysis of proteins to small peptides in the presence of ATP and magnesium. alpha-casein is the usual test substrate. In the absence of ATP, only oligopeptides shorter than five residues are hydrolyzed (such as succinyl-Leu-Tyr-|-NHMec, and Leu-Tyr-Leu-|-Tyr-Trp, in which cleavage of the -Tyr-|-Leu- and -Tyr-|-Trp bonds also occurs).. In terms of biological role, cleaves peptides in various proteins in a process that requires ATP hydrolysis. Has a chymotrypsin-like activity. Plays a major role in the degradation of misfolded proteins. This chain is ATP-dependent Clp protease proteolytic subunit 3, found in Trichormus variabilis (strain ATCC 29413 / PCC 7937) (Anabaena variabilis).